The sequence spans 588 residues: Proline--tRNA ligase (588 aa).

It belongs to the class-II aminoacyl-tRNA synthetase family. ProS type 1 subfamily. In terms of assembly, homodimer.

It is found in the cytoplasm. It carries out the reaction tRNA(Pro) + L-proline + ATP = L-prolyl-tRNA(Pro) + AMP + diphosphate. In terms of biological role, catalyzes the attachment of proline to tRNA(Pro) in a two-step reaction: proline is first activated by ATP to form Pro-AMP and then transferred to the acceptor end of tRNA(Pro). As ProRS can inadvertently accommodate and process non-cognate amino acids such as alanine and cysteine, to avoid such errors it has two additional distinct editing activities against alanine. One activity is designated as 'pretransfer' editing and involves the tRNA(Pro)-independent hydrolysis of activated Ala-AMP. The other activity is designated 'posttransfer' editing and involves deacylation of mischarged Ala-tRNA(Pro). The misacylated Cys-tRNA(Pro) is not edited by ProRS. The sequence is that of Proline--tRNA ligase from Corynebacterium glutamicum (strain ATCC 13032 / DSM 20300 / JCM 1318 / BCRC 11384 / CCUG 27702 / LMG 3730 / NBRC 12168 / NCIMB 10025 / NRRL B-2784 / 534).